Consider the following 157-residue polypeptide: Transcription elongation factor GreA (157 aa).

Residues 12–74 (LKKLEEELEY…TLEAMLKNAK (63 aa)) adopt a coiled-coil conformation.

The protein belongs to the GreA/GreB family.

Necessary for efficient RNA polymerase transcription elongation past template-encoded arresting sites. The arresting sites in DNA have the property of trapping a certain fraction of elongating RNA polymerases that pass through, resulting in locked ternary complexes. Cleavage of the nascent transcript by cleavage factors such as GreA or GreB allows the resumption of elongation from the new 3'terminus. GreA releases sequences of 2 to 3 nucleotides. The sequence is that of Transcription elongation factor GreA from Caldanaerobacter subterraneus subsp. tengcongensis (strain DSM 15242 / JCM 11007 / NBRC 100824 / MB4) (Thermoanaerobacter tengcongensis).